Reading from the N-terminus, the 92-residue chain is RNA-binding protein Hfq (92 aa).

The Sm domain occupies 10 to 71 (DLFLNQLRKE…ISSIMPSKPI (62 aa)). Residues 73–92 (YMAQAQNNQQASQQSNNNQG) are disordered. The span at 75–92 (AQAQNNQQASQQSNNNQG) shows a compositional bias: low complexity.

The protein belongs to the Hfq family. In terms of assembly, homohexamer.

RNA chaperone that binds small regulatory RNA (sRNAs) and mRNAs to facilitate mRNA translational regulation in response to envelope stress, environmental stress and changes in metabolite concentrations. Also binds with high specificity to tRNAs. The chain is RNA-binding protein Hfq from Caldicellulosiruptor bescii (strain ATCC BAA-1888 / DSM 6725 / KCTC 15123 / Z-1320) (Anaerocellum thermophilum).